The following is a 162-amino-acid chain: Glycine cleavage system H protein, mitochondrial (162 aa).

Residues 1 to 31 constitute a mitochondrion transit peptide; it reads MALRIWASSTANALRLSSATRPHFSPLSRCF. The 83-residue stretch at 53 to 135 folds into the Lipoyl-binding domain; the sequence is VATIGITDHA…YEDGWMIKVK (83 aa). Lys94 carries the post-translational modification N6-lipoyllysine.

This sequence belongs to the GcvH family. As to quaternary structure, the glycine cleavage system is composed of four proteins: P, T, L and H. The cofactor is (R)-lipoate.

The protein localises to the mitochondrion. Its function is as follows. The glycine cleavage system catalyzes the degradation of glycine. The H protein shuttles the methylamine group of glycine from the P protein to the T protein. This Flaveria pringlei protein is Glycine cleavage system H protein, mitochondrial (GDCSH).